The chain runs to 522 residues: Semenogelin-2 (522 aa).

The N-terminal stretch at 1 to 23 (MKSIILFVLSLLLILEKQAAVMG) is a signal peptide. 4 disordered regions span residues 26–62 (CGSKGQLPSGSSQFPRGQKGQHYSGQKDEQHTKSKGS), 132–158 (GGQAHRGTQNPSQDQGNSPSGKGISSQ), 272–358 (NLNQ…ERHL), and 379–522 (EEQI…PVST). Polar residues-rich tracts occupy residues 31–40 (QLPSGSSQFP) and 137–158 (RGTQNPSQDQGNSPSGKGISSQ). The segment covering 292–310 (RTEERQLNRGEKSVQKDVS) has biased composition (basic and acidic residues). Over residues 325 to 335 (KSQNQVTIHSQ) the composition is skewed to polar residues. Residues 336-345 (GQEHGHKENK) show a composition bias toward basic and acidic residues. Polar residues-rich tracts occupy residues 379-397 (EEQIHGKSQNQVRIPSQAQ), 427-436 (KDVSQSSTSF), and 446-464 (SQIQTPNPNQDQWSVQNAK). Composition is skewed to basic and acidic residues over residues 465–492 (GKSDQSAGREQDLLSHEQKGRHQQESSE) and 499–522 (TEHEVAYDDHLTQQYNEDRNPVST).

It belongs to the semenogelin family. In terms of assembly, interacts with SERPINA5.

The protein localises to the secreted. In terms of biological role, participates in the formation of a gel matrix (sperm coagulum) entrapping the accessory gland secretions and ejaculated spermatozoa. In Hylobates klossii (Kloss's gibbon), this protein is Semenogelin-2 (SEMG2).